The following is a 505-amino-acid chain: Elsinochrome transporter 1 (505 aa).

Gly residues predominate over residues 1–10 (MALSGLGSGP). The segment at 1–25 (MALSGLGSGPEGNPNNHQGKAIPTL) is disordered. Residues 35 to 55 (FLFSWVSFLVPFWSWYPFSPL) form a helical membrane-spanning segment. N64 and N80 each carry an N-linked (GlcNAc...) asparagine glycan. Residues 221 to 295 (DTPTGAGKPP…TEKGESLPLT (75 aa)) are disordered. The segment covering 255-267 (TPSSPDRSSSTNS) has biased composition (low complexity). Helical transmembrane passes span 313-333 (VIFSGPTLVLGACYFCTFGAE), 348-368 (LGLGLQNAGNLAAIFGLLNIV), 391-411 (KALLHTYCVMTGVFCIAIGLA), 417-437 (ATLVGLVSGGLAFFLEGANGL), 449-469 (VVSGFTGACGNLGGIVFAIVF), and 479-499 (VFWIIGAIIIGLQVATCWIKP).

The protein belongs to the major facilitator superfamily. Nitrate/nitrite porter (TC 2.A.1.8) family.

It is found in the cell membrane. Major facilitator-type transporter; part of the gene cluster that mediates the biosynthesis of elsinochromes, pigments consisting of at least four interconvertible tautomers (A, B, C and D) that have a core phenolic quinone to which various side chains are attached and which play an important role in fungal pathogenesis. Once elsinochrome is synthesized, it must be exported outside the fungal cells, which is probably accomplished by the ECT1 transporter, to avoid toxicity. This is Elsinochrome transporter 1 from Elsinoe fawcettii (Citrus scab fungus).